The sequence spans 178 residues: Large ribosomal subunit protein uL6 (178 aa).

Belongs to the universal ribosomal protein uL6 family. Part of the 50S ribosomal subunit.

In terms of biological role, this protein binds to the 23S rRNA, and is important in its secondary structure. It is located near the subunit interface in the base of the L7/L12 stalk, and near the tRNA binding site of the peptidyltransferase center. The chain is Large ribosomal subunit protein uL6 from Frankia alni (strain DSM 45986 / CECT 9034 / ACN14a).